We begin with the raw amino-acid sequence, 41 residues long: Large ribosomal subunit protein bL36 (41 aa).

It belongs to the bacterial ribosomal protein bL36 family.

The protein is Large ribosomal subunit protein bL36 of Rhodopseudomonas palustris (strain BisB5).